A 200-amino-acid chain; its full sequence is MELMVKGAAALTVSETTFGREFNEALVHQVVVAYAAGARQGTRAQKTRSEVSGGGAKPWRQKGTGRARAGTIRSPIWRSGGVTFAAKPQDHSLKVNKKMYRGALKSILSELVRQDRLIVVEDFSIEAPKTKELVAKLKELELNDVLIVTGEVDENLFLAARNLYKVDARDVAGIDPVSLVAFNKVLMTAAAVKQVEEMLA.

Positions 43–65 (RAQKTRSEVSGGGAKPWRQKGTG) are disordered.

It belongs to the universal ribosomal protein uL4 family. As to quaternary structure, part of the 50S ribosomal subunit.

In terms of biological role, one of the primary rRNA binding proteins, this protein initially binds near the 5'-end of the 23S rRNA. It is important during the early stages of 50S assembly. It makes multiple contacts with different domains of the 23S rRNA in the assembled 50S subunit and ribosome. Its function is as follows. Forms part of the polypeptide exit tunnel. This chain is Large ribosomal subunit protein uL4, found in Aliivibrio salmonicida (strain LFI1238) (Vibrio salmonicida (strain LFI1238)).